The chain runs to 407 residues: Putative glucose/galactose transporter (407 aa).

12 consecutive transmembrane segments (helical) span residues G11–I31, L47–I67, I70–F90, F96–L116, V139–F159, V180–L200, F225–F245, H263–M283, I300–F320, V321–G341, G349–T369, and N378–L398.

This sequence belongs to the major facilitator superfamily. FHS transporter (TC 2.A.1.7) family.

It localises to the cell inner membrane. Functionally, intake of glucose and galactose. This Helicobacter pylori (strain ATCC 700392 / 26695) (Campylobacter pylori) protein is Putative glucose/galactose transporter (gluP).